Consider the following 149-residue polypeptide: Large ribosomal subunit protein bL9 (149 aa).

It belongs to the bacterial ribosomal protein bL9 family.

In terms of biological role, binds to the 23S rRNA. This Acidothermus cellulolyticus (strain ATCC 43068 / DSM 8971 / 11B) protein is Large ribosomal subunit protein bL9.